Here is a 316-residue protein sequence, read N- to C-terminus: Retinol dehydrogenase 12 (316 aa).

An NADP(+)-binding site is contributed by 46–52 (GANTGIG). Residue Ser-175 participates in substrate binding. The active-site Proton acceptor is Tyr-200.

This sequence belongs to the short-chain dehydrogenases/reductases (SDR) family. Expressed in the retina.

It carries out the reaction all-trans-retinol + NADP(+) = all-trans-retinal + NADPH + H(+). The catalysed reaction is 11-cis-retinol + NADP(+) = 11-cis-retinal + NADPH + H(+). The enzyme catalyses 9-cis-retinol + NADP(+) = 9-cis-retinal + NADPH + H(+). It catalyses the reaction a 4-hydroxynonen-1-ol + NADP(+) = a 4-hydroxynonenal + NADPH + H(+). It carries out the reaction (E)-non-2-en-1-ol + NADP(+) = (E)-non-2-enal + NADPH + H(+). The catalysed reaction is (Z)-non-6-en-1-ol + NADP(+) = (Z)-non-6-enal + NADPH + H(+). The enzyme catalyses nonan-1-ol + NADP(+) = nonanal + NADPH + H(+). It functions in the pathway cofactor metabolism; retinol metabolism. In terms of biological role, retinoids dehydrogenase/reductase with a clear preference for NADP. Displays high activity towards 9-cis, 11-cis and all-trans-retinal. Shows very weak activity towards 13-cis-retinol. Also exhibits activity, albeit with lower affinity than for retinaldehydes, towards lipid peroxidation products (C9 aldehydes) such as 4-hydroxynonenal and trans-2-nonenal. May play an important function in photoreceptor cells to detoxify 4-hydroxynonenal and potentially other toxic aldehyde products resulting from lipid peroxidation. Has no dehydrogenase activity towards steroids. In Bos taurus (Bovine), this protein is Retinol dehydrogenase 12 (RDH12).